We begin with the raw amino-acid sequence, 206 residues long: Thymidylate kinase (206 aa).

Residue 10 to 17 participates in ATP binding; the sequence is GNDGSGKS.

Belongs to the thymidylate kinase family.

The enzyme catalyses dTMP + ATP = dTDP + ADP. Functionally, phosphorylation of dTMP to form dTDP in both de novo and salvage pathways of dTTP synthesis. The protein is Thymidylate kinase of Caldicellulosiruptor saccharolyticus (strain ATCC 43494 / DSM 8903 / Tp8T 6331).